The chain runs to 305 residues: Insulin-like peptide (305 aa).

The N-terminal stretch at 1–22 (MNLSSVYVLASLAVVCLLVKET) is a signal peptide. 3 disulfides stabilise this stretch: Cys-28–Cys-87, Cys-40–Cys-100, and Cys-86–Cys-91. A propeptide spans 52–76 (SVSKRAIDFISEQQAKDYMGAMPHI) (connecting peptide). A d region spans residues 102 to 114 (PYSTAPATATPVR). Residues 102 to 305 (PYSTAPATAT…RDSYHLTELR (204 aa)) constitute a propeptide, d/E peptide. A compositionally biased stretch (low complexity) spans 107–118 (PATATPVRTTEP). Disordered stretches follow at residues 107–130 (PATA…PLDG) and 236–305 (HNQT…TELR). The e stretch occupies residues 115–305 (TTEPQPEEAE…RDSYHLTELR (191 aa)). The span at 119–128 (QPEEAEDDPL) shows a compositional bias: acidic residues. Basic and acidic residues-rich tracts occupy residues 236-245 (HNQTDKKEPT) and 291-305 (RRIE…TELR).

Belongs to the insulin family.

Its subcellular location is the secreted. The protein is Insulin-like peptide (ILP) of Branchiostoma californiense (California lancelet).